We begin with the raw amino-acid sequence, 1185 residues long: Liprin-alpha-4 (1185 aa).

Coiled-coil stretches lie at residues 24–123 (ANFE…CLVS) and 165–499 (DEKV…GRGG). Disordered regions lie at residues 638–709 (SASP…RTLR) and 721–757 (EEGK…KSSI). The residue at position 640 (S640) is a Phosphoserine. The span at 645–656 (GRSTPKLTSRSA) shows a compositional bias: polar residues. Residue S681 is modified to Phosphoserine. Residues 684–695 (SREENREDKATI) show a composition bias toward basic and acidic residues. Residues 729–742 (DQGSNPSSSNSSQD) are compositionally biased toward low complexity. SAM domains are found at residues 829-895 (WDGP…MVSL), 944-1008 (NHEW…LKRL), and 1032-1101 (WTND…LLAL).

Belongs to the liprin family. Liprin-alpha subfamily. Forms homodimers and heterodimers with liprins-alpha and liprins-beta. Interacts with the second PTPase domain of PTPRD, PTPRF and PTPRS. Interacts with RIMS1 and RIMS2. Interacts with GIT1 and GIT2. Interacts with GRIP1. Interacts with KIF1A. Expressed only in the heart, brain, and skeletal muscle.

It localises to the cytoplasm. Its subcellular location is the cell surface. Functionally, may regulate the disassembly of focal adhesions. May localize receptor-like tyrosine phosphatases type 2A at specific sites on the plasma membrane, possibly regulating their interaction with the extracellular environment and their association with substrates. In Homo sapiens (Human), this protein is Liprin-alpha-4 (PPFIA4).